The primary structure comprises 148 residues: Small ribosomal subunit protein eS6 (148 aa).

Belongs to the eukaryotic ribosomal protein eS6 family.

This is Small ribosomal subunit protein eS6 from Pyrobaculum neutrophilum (strain DSM 2338 / JCM 9278 / NBRC 100436 / V24Sta) (Thermoproteus neutrophilus).